The chain runs to 682 residues: DNA-directed RNA polymerase subunit beta' (682 aa).

The Zn(2+) site is built by Cys69, Cys71, Cys87, and Cys90. Asp489, Asp491, and Asp493 together coordinate Mg(2+).

Belongs to the RNA polymerase beta' chain family. RpoC1 subfamily. In terms of assembly, in plastids the minimal PEP RNA polymerase catalytic core is composed of four subunits: alpha, beta, beta', and beta''. When a (nuclear-encoded) sigma factor is associated with the core the holoenzyme is formed, which can initiate transcription. Mg(2+) serves as cofactor. Requires Zn(2+) as cofactor.

Its subcellular location is the plastid. It is found in the chloroplast. The catalysed reaction is RNA(n) + a ribonucleoside 5'-triphosphate = RNA(n+1) + diphosphate. Its function is as follows. DNA-dependent RNA polymerase catalyzes the transcription of DNA into RNA using the four ribonucleoside triphosphates as substrates. This Platanus occidentalis (Sycamore) protein is DNA-directed RNA polymerase subunit beta'.